The primary structure comprises 182 residues: UPF0215 protein Pcal_0119 (182 aa).

It belongs to the UPF0215 family.

The protein is UPF0215 protein Pcal_0119 of Pyrobaculum calidifontis (strain DSM 21063 / JCM 11548 / VA1).